A 378-amino-acid chain; its full sequence is Protein RecA (378 aa).

Residue 79–86 coordinates ATP; it reads GPESSGKT.

It belongs to the RecA family.

The protein resides in the cytoplasm. Its function is as follows. Can catalyze the hydrolysis of ATP in the presence of single-stranded DNA, the ATP-dependent uptake of single-stranded DNA by duplex DNA, and the ATP-dependent hybridization of homologous single-stranded DNAs. It interacts with LexA causing its activation and leading to its autocatalytic cleavage. The sequence is that of Protein RecA from Streptococcus pyogenes serotype M28 (strain MGAS6180).